Consider the following 36-residue polypeptide: Trypsin inhibitor 2 (36 aa).

Cystine bridges form between Cys-3-Cys-20, Cys-10-Cys-24, and Cys-19-Cys-35.

In terms of biological role, trypsin inhibitor. This chain is Trypsin inhibitor 2, found in Spinacia oleracea (Spinach).